The sequence spans 263 residues: Tryptophan synthase alpha chain (263 aa).

Catalysis depends on proton acceptor residues Glu-46 and Asp-57.

The protein belongs to the TrpA family. Tetramer of two alpha and two beta chains.

The catalysed reaction is (1S,2R)-1-C-(indol-3-yl)glycerol 3-phosphate + L-serine = D-glyceraldehyde 3-phosphate + L-tryptophan + H2O. It functions in the pathway amino-acid biosynthesis; L-tryptophan biosynthesis; L-tryptophan from chorismate: step 5/5. In terms of biological role, the alpha subunit is responsible for the aldol cleavage of indoleglycerol phosphate to indole and glyceraldehyde 3-phosphate. The sequence is that of Tryptophan synthase alpha chain from Bacteroides fragilis (strain ATCC 25285 / DSM 2151 / CCUG 4856 / JCM 11019 / LMG 10263 / NCTC 9343 / Onslow / VPI 2553 / EN-2).